We begin with the raw amino-acid sequence, 578 residues long: MKDTIRQLIQQALTQLVTEGVLPEGLTPAIQVENARDKTHGDFASNIAMMLAKPAGMKPRDLAEKIIAALPTSADISKAEIAGPGFLNFFQNTDALANRLDAALADDHLGVHKAGPVEKVVIDMSAPNLAKEMHVGHLRSTIIGDSVARVLEFLGDDVIRQNHVGDWGTQFGMLLAYLEENPITSDELSDLENFYRAAKKRFDESEEFATRARGLVVKLQAGDPDCLALWTRFKDISLSHCQKTYELLNVKLTMADVMGESAYNDDLANVVADLKSKGLLVESQGAQCVFLEEFKNTEGEPLPVIVQKADGGYLYATTDLAAVRYRSNTLQADRALYFVDQRQALHFNQVFEVARRAGFVGHPMKMEHMGFGTMNGADGRPFKTRDGGTVKLIDLLTEAKERAYALVKEKNPSLAEDELRKIGEVVGIGAVKYADLSKHRTSDYSFNFELMLNFEGNTAPYLLYAYTRVAGVFRKLGKGFDEVDGNIVLQAAHEQDLAARLAQFGEILNNVADKGTPHVLCSYLYDLAGLFSSFYENCPILAAETAEQQQSRLRLAALTGRTLKQGLELLGLETLERM.

A 'HIGH' region motif is present at residues 127-137; the sequence is PNLAKEMHVGH.

This sequence belongs to the class-I aminoacyl-tRNA synthetase family. Monomer.

Its subcellular location is the cytoplasm. It catalyses the reaction tRNA(Arg) + L-arginine + ATP = L-arginyl-tRNA(Arg) + AMP + diphosphate. The polypeptide is Arginine--tRNA ligase (Pseudomonas entomophila (strain L48)).